The sequence spans 504 residues: MTKSSKDICSENEGKKNGKSGFFSTSFKYVLSACIASFIFGYQVSVLNTIKNFIVVEFEWCKGEKDRLNCSNNTIQSSFLLASVFIGAVLGCGFSGYLVQFGRRLSLLIIYNFFFLVSILTSITHHFHTILFARLLSGFGIGLVTVSVPMYISEMTHKDKKGAYGVMHQLFITFGIFVAVMLGLAMGEGPKADSTEPLTSFAKLWWRLMFLFPSVISLIGILALVVFFKEETPYFLFEKGRIEESKNILKKIYETDNVDEPLNAIKEAVEQNESAKKNSLSLLSALKIPSYRYVIILGCLLSGLQQFTGINVLVSNSNELYKEFLDSHLITILSVVMTAVNFLMTFPAIYIVEKLGRKTLLLWGCVGVLVAYLPTAIANEINRNSNFVKILSIVATFVMIISFAVSYGPVLWIYLHEMFPSEIKDSAASLASLVNWVCAIIVVFPSDIIIKKSPSILFIVFSVMSILTFFFIFFFIKETKGGEIGTSPYITMEERQKHMTKSVV.

At 1 to 29 (MTKSSKDICSENEGKKNGKSGFFSTSFKY) the chain is on the cytoplasmic side. The chain crosses the membrane as a helical span at residues 30–50 (VLSACIASFIFGYQVSVLNTI). The Extracellular portion of the chain corresponds to 51–78 (KNFIVVEFEWCKGEKDRLNCSNNTIQSS). A disulfide bridge links Cys-61 with Cys-70. The chain crosses the membrane as a helical span at residues 79-99 (FLLASVFIGAVLGCGFSGYLV). At 100 to 104 (QFGRR) the chain is on the cytoplasmic side. A helical transmembrane segment spans residues 105–125 (LSLLIIYNFFFLVSILTSITH). Residues 126 to 129 (HFHT) are Extracellular-facing. Residues 130–150 (ILFARLLSGFGIGLVTVSVPM) form a helical membrane-spanning segment. Topologically, residues 151–165 (YISEMTHKDKKGAYG) are cytoplasmic. A helical membrane pass occupies residues 166 to 186 (VMHQLFITFGIFVAVMLGLAM). Gln-169 contributes to the alpha-D-glucose binding site. Beta-D-glucose is bound at residue Gln-169. Residues 187–207 (GEGPKADSTEPLTSFAKLWWR) are Extracellular-facing. The helical transmembrane segment at 208–228 (LMFLFPSVISLIGILALVVFF) threads the bilayer. Topologically, residues 229–293 (KEETPYFLFE…SALKIPSYRY (65 aa)) are cytoplasmic. The chain crosses the membrane as a helical span at residues 294–314 (VIILGCLLSGLQQFTGINVLV). The alpha-D-glucose site is built by Gln-305, Gln-306, and Asn-311. Gln-305 contributes to the beta-D-glucose binding site. Asn-311 serves as a coordination point for beta-D-glucose. Residues 315 to 331 (SNSNELYKEFLDSHLIT) lie on the Extracellular side of the membrane. A helical transmembrane segment spans residues 332-352 (ILSVVMTAVNFLMTFPAIYIV). Asn-341 lines the beta-D-glucose pocket. Residues 353 to 358 (EKLGRK) are Cytoplasmic-facing. The chain crosses the membrane as a helical span at residues 359–379 (TLLLWGCVGVLVAYLPTAIAN). The Extracellular segment spans residues 380–392 (EINRNSNFVKILS). Residues 393–413 (IVATFVMIISFAVSYGPVLWI) form a helical membrane-spanning segment. Position 412 (Trp-412) interacts with alpha-D-glucose. At 414–429 (YLHEMFPSEIKDSAAS) the chain is on the cytoplasmic side. Residues 430 to 450 (LASLVNWVCAIIVVFPSDIII) traverse the membrane as a helical segment. Over 451–455 (KKSPS) the chain is Extracellular. A helical membrane pass occupies residues 456-476 (ILFIVFSVMSILTFFFIFFFI). The Cytoplasmic portion of the chain corresponds to 477–504 (KETKGGEIGTSPYITMEERQKHMTKSVV).

Belongs to the major facilitator superfamily. Sugar transporter (TC 2.A.1.1) family. As to quaternary structure, homodimer.

Its subcellular location is the cell membrane. It catalyses the reaction D-glucose(out) = D-glucose(in). The catalysed reaction is D-fructose(out) = D-fructose(in). It carries out the reaction D-galactose(in) = D-galactose(out). The enzyme catalyses D-mannose(out) = D-mannose(in). It catalyses the reaction D-glucosamine(out) = D-glucosamine(in). The catalysed reaction is D-xylose(out) = D-xylose(in). With respect to regulation, inhibited by cytochalasin B. Inhibited by compound 3361 (3-O-((undec-10-en)-1-yl)-D-glucose). Inhibited by compound HTI-1. Its function is as follows. Sodium-independent facilitative hexose transporter. Can transport D-glucose and D-fructose. Can transport D-mannose, D-galactose, D-xylose and D-glucosamine. This Plasmodium falciparum (isolate 3D7) protein is Hexose transporter 1.